The chain runs to 453 residues: Venom prothrombin activator notecarin-D2 (453 aa).

Positions 1–20 (MAPQLLLCLILTFLWSLPEA) are cleaved as a signal peptide. Residues 21–40 (ESNVFLKSKVANRFLQRTKR) constitute a propeptide that is removed on maturation. The Gla domain occupies 41–86 (SNSLFEEIRPGNIERECIEEKCSKEEAREVFEDNEKTETFWNVYVD). A 4-carboxyglutamate mark is found at Glu46, Glu47, Glu54, Glu56, Glu59, Glu60, Glu65, Glu66, Glu69, Glu72, and Glu75. Cys57 and Cys62 are joined by a disulfide. The EGF-like 1; calcium-binding domain occupies 86–122 (DGDQCSSNPCHYRGTCKDGIGSYTCTCLPNYEGKNCE). Cystine bridges form between Cys90–Cys101, Cys95–Cys110, Cys112–Cys121, Cys129–Cys140, Cys136–Cys149, Cys151–Cys164, Cys172–Cys326, Cys216–Cys221, Cys236–Cys252, Cys374–Cys388, and Cys399–Cys427. Ser92 carries an O-linked (Hex...) serine glycan. The 36-residue stretch at 129–164 (CRAFNGNCWHFCKRVQSETQCSCAESYLLGVDGHSC) folds into the EGF-like 2 domain. A propeptide spans 182 to 209 (REASLPDFVQSQKATVLKKSDNPSPDIR) (activation peptide). Positions 210–451 (IVNGMDCKLG…FIPWIKKIMS (242 aa)) constitute a Peptidase S1 domain. His251 (charge relay system) is an active-site residue. The N-linked (GlcNAc...) asparagine glycan is linked to Asn254. Catalysis depends on Asp306, which acts as the Charge relay system. Ser403 acts as the Charge relay system in catalysis.

It belongs to the peptidase S1 family. Snake venom subfamily. As to quaternary structure, heterodimer of a light chain and a heavy chain; disulfide-linked. In terms of processing, gamma-carboxyglutamate residues are formed by vitamin K dependent carboxylation. These residues are essential for the binding of calcium. In terms of tissue distribution, expressed by the venom gland.

The protein localises to the secreted. It carries out the reaction Selective cleavage of Arg-|-Thr and then Arg-|-Ile bonds in prothrombin to form thrombin.. Snake prothrombin activator that attacks the hemostatic system of prey. This protein is functionally similar to blood coagulation factor Xa. This Notechis scutatus scutatus (Mainland tiger snake) protein is Venom prothrombin activator notecarin-D2.